A 275-amino-acid polypeptide reads, in one-letter code: Methylglyoxal reductase DkgA (275 aa).

Catalysis depends on Y51, which acts as the Proton donor. A substrate-binding site is contributed by H107. Position 187 to 241 (187 to 241 (SPLAQGGEGVFDQKVIRELADKYGKTPAQIVIRWHLDCGLVVIPKSVTPSRIAEN)) interacts with NADP(+).

It belongs to the aldo/keto reductase family. Monomer.

The protein resides in the cytoplasm. The catalysed reaction is hydroxyacetone + NADP(+) = methylglyoxal + NADPH + H(+). In terms of biological role, aldo-keto reductase that significantly contributes to cellular methylglyoxal detoxification by catalyzing the NADPH-dependent conversion of methylglyoxal to acetol. This Salmonella typhimurium (strain LT2 / SGSC1412 / ATCC 700720) protein is Methylglyoxal reductase DkgA.